The chain runs to 100 residues: Urease subunit gamma (100 aa).

The protein belongs to the urease gamma subunit family. As to quaternary structure, heterotrimer of UreA (gamma), UreB (beta) and UreC (alpha) subunits. Three heterotrimers associate to form the active enzyme.

Its subcellular location is the cytoplasm. The enzyme catalyses urea + 2 H2O + H(+) = hydrogencarbonate + 2 NH4(+). It functions in the pathway nitrogen metabolism; urea degradation; CO(2) and NH(3) from urea (urease route): step 1/1. The sequence is that of Urease subunit gamma from Ectopseudomonas mendocina (strain ymp) (Pseudomonas mendocina).